The chain runs to 605 residues: Isocitrate dehydrogenase kinase/phosphatase (605 aa).

Residues 353 to 359 and Lys-374 each bind ATP; that span reads APGFKGT. Asp-413 is a catalytic residue.

It belongs to the AceK family.

It is found in the cytoplasm. The catalysed reaction is L-seryl-[isocitrate dehydrogenase] + ATP = O-phospho-L-seryl-[isocitrate dehydrogenase] + ADP + H(+). Bifunctional enzyme which can phosphorylate or dephosphorylate isocitrate dehydrogenase (IDH) on a specific serine residue. This is a regulatory mechanism which enables bacteria to bypass the Krebs cycle via the glyoxylate shunt in response to the source of carbon. When bacteria are grown on glucose, IDH is fully active and unphosphorylated, but when grown on acetate or ethanol, the activity of IDH declines drastically concomitant with its phosphorylation. The protein is Isocitrate dehydrogenase kinase/phosphatase of Rhodopseudomonas palustris (strain HaA2).